The chain runs to 272 residues: Insulin-like growth factor-binding protein 1 (272 aa).

Residues 1–25 form the signal peptide; the sequence is MPEFLTVVSWPFLILLSFQIGVAAG. The 82-residue stretch at 28 to 109 folds into the IGFBP N-terminal domain; the sequence is QPWHCAPCTA…TRGQGACVPE (82 aa). Cystine bridges form between Cys32-Cys59, Cys35-Cys61, Cys43-Cys62, Cys50-Cys65, Cys73-Cys86, and Cys80-Cys106. Phosphoserine is present on residues Ser139, Ser157, and Ser169. Position 170 is a phosphothreonine (Thr170). Tyr171 carries the post-translational modification Phosphotyrosine. Residues 186–264 form the Thyroglobulin type-1 domain; it reads KEPCQRELYK…SLETRGDPNC (79 aa). 3 disulfides stabilise this stretch: Cys189-Cys219, Cys230-Cys241, and Cys243-Cys264. The residue at position 255 (Ser255) is a Phosphoserine. The Cell attachment site motif lies at 259-261; it reads RGD.

As to quaternary structure, binds equally well IGF1 and IGF2. Interacts with integrin ITGA5:ITGB1. Interacts with VHL; this interaction inhibits HIF1A degradation.

The protein resides in the secreted. In terms of biological role, multifunctional protein that plays a critical role in regulating the availability of IGFs such as IGF1 and IGF2 to their receptors and thereby regulates IGF-mediated cellular processes including cell migration, proliferation, differentiation or apoptosis in a cell-type specific manner. Also plays a positive role in cell migration by interacting with integrin ITGA5:ITGB1 through its RGD motif. Mechanistically, binding to integrins leads to activation of focal adhesion kinase/PTK2 and stimulation of the mitogen-activated protein kinase (MAPK) pathway. Regulates cardiomyocyte apoptosis by suppressing HIF-1alpha/HIF1A ubiquitination and subsequent degradation. The protein is Insulin-like growth factor-binding protein 1 (Igfbp1) of Mus musculus (Mouse).